A 371-amino-acid polypeptide reads, in one-letter code: tRNA/tmRNA (uracil-C(5))-methyltransferase (371 aa).

S-adenosyl-L-methionine contacts are provided by Gln-194, Tyr-223, Asn-228, Glu-244, and Asp-304. Cys-329 (nucleophile) is an active-site residue. Glu-363 functions as the Proton acceptor in the catalytic mechanism.

This sequence belongs to the class I-like SAM-binding methyltransferase superfamily. RNA M5U methyltransferase family. TrmA subfamily.

The catalysed reaction is uridine(54) in tRNA + S-adenosyl-L-methionine = 5-methyluridine(54) in tRNA + S-adenosyl-L-homocysteine + H(+). It carries out the reaction uridine(341) in tmRNA + S-adenosyl-L-methionine = 5-methyluridine(341) in tmRNA + S-adenosyl-L-homocysteine + H(+). Its function is as follows. Dual-specificity methyltransferase that catalyzes the formation of 5-methyluridine at position 54 (m5U54) in all tRNAs, and that of position 341 (m5U341) in tmRNA (transfer-mRNA). The protein is tRNA/tmRNA (uracil-C(5))-methyltransferase of Sulfurovum sp. (strain NBC37-1).